The following is a 314-amino-acid chain: Acetaldehyde dehydrogenase 1 (314 aa).

15–18 (SGNI) contributes to the NAD(+) binding site. The active-site Acyl-thioester intermediate is C133. Residues 164–172 (SAGPGTRAN) and N291 each bind NAD(+).

This sequence belongs to the acetaldehyde dehydrogenase family.

The catalysed reaction is acetaldehyde + NAD(+) + CoA = acetyl-CoA + NADH + H(+). This is Acetaldehyde dehydrogenase 1 from Paraburkholderia xenovorans (strain LB400).